The primary structure comprises 340 residues: Glycerol-3-phosphate dehydrogenase [NAD(P)+] (340 aa).

Residues Ser-11, Trp-12, Arg-32, Arg-33, and Lys-106 each contribute to the NADPH site. Residues Lys-106, Gly-138, and Ser-140 each coordinate sn-glycerol 3-phosphate. An NADPH-binding site is contributed by Ala-142. Positions 193, 246, 256, 257, and 258 each coordinate sn-glycerol 3-phosphate. Lys-193 functions as the Proton acceptor in the catalytic mechanism. Arg-257 contributes to the NADPH binding site. NADPH-binding residues include Val-281 and Glu-283.

It belongs to the NAD-dependent glycerol-3-phosphate dehydrogenase family.

It is found in the cytoplasm. The catalysed reaction is sn-glycerol 3-phosphate + NAD(+) = dihydroxyacetone phosphate + NADH + H(+). It catalyses the reaction sn-glycerol 3-phosphate + NADP(+) = dihydroxyacetone phosphate + NADPH + H(+). The protein operates within membrane lipid metabolism; glycerophospholipid metabolism. Catalyzes the reduction of the glycolytic intermediate dihydroxyacetone phosphate (DHAP) to sn-glycerol 3-phosphate (G3P), the key precursor for phospholipid synthesis. This is Glycerol-3-phosphate dehydrogenase [NAD(P)+] from Shouchella clausii (strain KSM-K16) (Alkalihalobacillus clausii).